We begin with the raw amino-acid sequence, 340 residues long: MLDPRARTLLKTLIERYIADGQPVGSRTLSRYSGLELSPATIRNVMSDLEELGLVSSPHTSAGRVPTPRGYRLFVDTMLTVESPIDSDAVTRLVQTTLQAGEPQQRVVAAAASVLSNLSQFAGVVLTPRRSHVFKQIEFLRLSDKRILLIIVTPEGDVQNRMIATQRDYAPAQLTEASNYINAHFAGLSFDEVRRRLREEIDQLRGDMTALMHAAVTASTEEPDDEETVLISGERNLLEVADLSSDMARLRKLFDVFDQKTSLLQLLDVSSHAQGVQIFIGGESTLVPIDEMSVVTAPYEVNGKIVGTLGVIGPTRMAYNRVIPIVDITARLLSLTLSQQ.

It belongs to the HrcA family.

Negative regulator of class I heat shock genes (grpE-dnaK-dnaJ and groELS operons). Prevents heat-shock induction of these operons. This chain is Heat-inducible transcription repressor HrcA, found in Burkholderia mallei (strain NCTC 10247).